The following is a 290-amino-acid chain: L-proline cis-3-hydroxylase 1 (290 aa).

Fe cation is bound by residues His107, Asp109, and His158. Residue Arg168 participates in 2-oxoglutarate binding.

The protein belongs to the L-proline cis-4-/cis-3-hydroxylase family. As to quaternary structure, homodimer. The cofactor is Fe(2+).

It carries out the reaction L-proline + 2-oxoglutarate + O2 = cis-3-hydroxy-L-proline + succinate + CO2. Its activity is regulated as follows. Inhibited by metal ions such as Co(2+), Zn(2+), Ni(2+) or Cu(2+). Is also inhibited by EDTA in vitro. Unlike the procollagen-proline cis-3- and trans-4-hydroxylases from mammals, does not necessarily require L-ascorbate for activity although it does increase the activity of the enzyme. In terms of biological role, dioxygenase that catalyzes the 2-oxoglutarate-dependent selective hydroxylation of free L-proline to cis-3-hydroxy-L-proline (cis-3-Hyp). D-proline, trans-4-hydroxy-L-proline, cis-4-hydroxy-L-proline, cis-4-hydroxy-D-proline, and 3,4-dehydro-DL-proline are not substrates. The sequence is that of L-proline cis-3-hydroxylase 1 from Streptomyces sp.